A 297-amino-acid chain; its full sequence is MSKVSDLFDVTWEDMRDKMKTWREENYRNSEHVIEVGEELINEHASKLGDDIWIIYEQVMIAALDCGRDDIAMSCLQELRRQFPGSHRVKRLTGLRFEAMERYDDALQIYDRILQDDPTNTAARKRKIAIRKAQGRNSEAIRELNEYLEQFVGDQEAWHELAELYINELDYAKAAFCLEELILTNPHNHFYYQQFAEVKYTQGGLENLELSRKYFSQALKLNNHNMRALFGLYISSVHIASNPKASAKMKKDNVKYATWAASQIKKAYQLAGRTMTDTQTSLKAVEDMLETLQITQS.

TPR repeat units lie at residues 87–120 (HRVK…DPTN), 155–188 (QEAW…NPHN), and 192–225 (YQQF…NNHN).

The protein belongs to the EMC2 family. As to quaternary structure, component of the ER membrane protein complex (EMC).

It is found in the endoplasmic reticulum membrane. In terms of biological role, part of the endoplasmic reticulum membrane protein complex (EMC) that enables the energy-independent insertion into endoplasmic reticulum membranes of newly synthesized membrane proteins. Preferentially accommodates proteins with transmembrane domains that are weakly hydrophobic or contain destabilizing features such as charged and aromatic residues. Involved in the cotranslational insertion of multi-pass membrane proteins in which stop-transfer membrane-anchor sequences become ER membrane spanning helices. It is also required for the post-translational insertion of tail-anchored/TA proteins in endoplasmic reticulum membranes. By mediating the proper cotranslational insertion of N-terminal transmembrane domains in an N-exo topology, with translocated N-terminus in the lumen of the ER, controls the topology of multi-pass membrane proteins. By regulating the insertion of various proteins in membranes, it is indirectly involved in many cellular processes. This Xenopus laevis (African clawed frog) protein is ER membrane protein complex subunit 2-A (emc2-a).